A 523-amino-acid chain; its full sequence is MSFIYGLQSAARNCFFFRFNLLTNWRKCNTQAVTSRDFHQVKINHIVNKSLGLGVNHGDRWTPLPENFLFYRTFNTKRKGCLLSSRSKEIWMISRKCTAWTDSFSRQLPMKNVPVVPAHSMSHPLNCLPTRDIRSFHTSPRCQAAPAPLLLMILKPAQKLLAIIVGRGIRKWWQALPPNKKELFKESLRKNKWKLFLGLSSFGLLFVVFYFTHLEVSPVTGRSKLLILGKEHFRLLSELEYEAWMEEFKNDMLTEKDARYVAVKAVVHHLIECNQDIPGISEINWIIHVVDSPDINAFVLPNGQVFVFTGLLNSVTDIHQLSFLLGHEIAHAVLEHAAEKASLVHLLDFLGLIFLTTIWAICPRDSLALLGQWIQSKLQEFLFDRPYSRTLEAEADRIGLQLAAKACVDVRASSVFWQQMEFAESLHGHPKLPEWLSTHPSHGNRAEHLDRLIPQALKIRETCNCPPLSGPDPRLLFKLSMKNFLEAEKEDLNITVKQKMDALPIQNQKQIPLTCIVDKRTGS.

Residues 1–45 (MSFIYGLQSAARNCFFFRFNLLTNWRKCNTQAVTSRDFHQVKINH) constitute a mitochondrion transit peptide. The propeptide occupies 46 to 143 (IVNKSLGLGV…RSFHTSPRCQ (98 aa)). The Mitochondrial matrix portion of the chain corresponds to 144 to 195 (AAPAPLLLMILKPAQKLLAIIVGRGIRKWWQALPPNKKELFKESLRKNKWKL). The tract at residues 148–167 (PLLLMILKPAQKLLAIIVGR) is cardiolipin-binding. Positions 165-195 (VGRGIRKWWQALPPNKKELFKESLRKNKWKL) are stress-sensor region. Residues 196–216 (FLGLSSFGLLFVVFYFTHLEV) traverse the membrane as a helical segment. His-327 provides a ligand contact to Zn(2+). Glu-328 is a catalytic residue. Residues His-331 and Glu-392 each contribute to the Zn(2+) site. Cys-407 and Cys-465 are joined by a disulfide.

The protein belongs to the peptidase M48 family. As to quaternary structure, homooligomer. Requires Zn(2+) as cofactor. Autocatalytically cleaved in response to mitochondrial depolarization both at the N-terminus and C-terminus to generate the short active form (S-OMA1). Autocatalytic processing at the C-terminus takes place at residues 447-456. The S-OMA1 form is unstable. OMA1 pre-processing by AFG3L2 may participate in maturation before OMA1 autocatalytic cleavage. Degraded by YMEL1 in response to membrane depolarization. Protein turnover is regulated by prohibitin (PHB and PHB2), which promotes degradation of OMA1 in a cardiolipin-binding manner. Post-translationally, may form a redox-dependent disulfide bond. Exists in a semi-oxidized state and is activated by prolonged hypoxia.

It localises to the mitochondrion inner membrane. With respect to regulation, protease activity is activated upon autocatalytic cleavage in response to mitochondrial depolarization. Metalloprotease that is part of the quality control system in the inner membrane of mitochondria. Activated in response to various mitochondrial stress, leading to the proteolytic cleavage of target proteins, such as OPA1, UQCC3 and DELE1. Involved in the fusion of the mitochondrial inner membranes by mediating cleavage of OPA1 at S1 position, generating the soluble OPA1 (S-OPA1), which cooperates with the membrane form (L-OPA1) to coordinate the fusion of mitochondrial inner membranes. Following stress conditions that induce loss of mitochondrial membrane potential, mediates cleavage of OPA1, leading to excess production of soluble OPA1 (S-OPA1) and negative regulation of mitochondrial fusion. Involved in mitochondrial safeguard in response to transient mitochondrial membrane depolarization (flickering) by catalyzing cleavage of OPA1, leading to excess production of S-OPA1, preventing mitochondrial hyperfusion. Also acts as a regulator of apoptosis: upon BAK and BAX aggregation, mediates cleavage of OPA1, leading to the remodeling of mitochondrial cristae and allowing the release of cytochrome c from mitochondrial cristae. In depolarized mitochondria, may also act as a backup protease for PINK1 by mediating PINK1 cleavage and promoting its subsequent degradation by the proteasome. May also cleave UQCC3 in response to mitochondrial depolarization. Also acts as an activator of the integrated stress response (ISR): in response to mitochondrial stress, mediates cleavage of DELE1 to generate the processed form of DELE1 (S-DELE1), which translocates to the cytosol and activates EIF2AK1/HRI to trigger the ISR. Its role in mitochondrial quality control is essential for regulating lipid metabolism as well as to maintain body temperature and energy expenditure under cold-stress conditions. Binds cardiolipin, possibly regulating its protein turnover. Required for the stability of the respiratory supercomplexes. The sequence is that of Metalloendopeptidase OMA1, mitochondrial from Bos taurus (Bovine).